The following is a 187-amino-acid chain: Peptidoglycan-recognition protein 3 (187 aa).

The first 19 residues, 1 to 19 (MKAFLVALLISIELALVFA), serve as a signal peptide directing secretion. Cystine bridges form between C21-C144 and C58-C64. An N-acetylmuramoyl-L-alanine amidase domain is found at 43 to 170 (KPLKYVIINH…RTIRQTNSPG (128 aa)). An N-linked (GlcNAc...) asparagine glycan is attached at N51.

The protein belongs to the N-acetylmuramoyl-L-alanine amidase 2 family.

The protein localises to the secreted. In terms of biological role, peptidoglycan-recognition protein probably involved in innate immunity by binding to peptidoglycans (PGN) of bacteria and activating the prophenoloxidase (proPO) cascade immune response. Binds to 1,3-beta-D-glucan and PGN. This chain is Peptidoglycan-recognition protein 3 (PGRP-3), found in Holotrichia diomphalia (Korean black chafer).